The following is a 509-amino-acid chain: MYPNSPSLGRIPLPLPCARQQQTSAYLSKVPVSVAPDLLSPEQFFQASLNIHKNANLPRLLMNGNVLTVPPLSSPPWSYLNHSPLISPGSPPSSFQNRKRRSDEGNSPYDVKRQRFQSPQEQTVNHQAVPLRGDIRCSYPGSPAFPLLQSPSPPVLKGHSSNSGDCWLYDHIDTTLPVAKDKLSKQILDLFQALQQQVCDLKKKDICRAELQREIQQIFPQSRLYLVGSSLNGFGIRSSDADLCLVLKEEPMNQNTEARHILSLLHKHFYTRLSYIERPQFIRAKVPIVKFRDKVSGAEFDLNVNNVVGIRNTFLLRTYAYLDKRVRPLVLVIKKWANHHGINDASRGTLSSYTIVLMVLHYLQTLPEPILPSLQKKYPECFDRTMQLHLVHQAPRNIPQFLSKNETPLGDLLLGFLKYFAVEFDWSKDIISLREAKALPRTDDYEWRNKYICVEEPFDGSNTARAVYEKQKFDLIRAEFLKAWVALRDNRDLYSLLPVKGIMKKMHSL.

Residues 88–125 (PGSPPSSFQNRKRRSDEGNSPYDVKRQRFQSPQEQTVN) are disordered. Over residues 116–125 (FQSPQEQTVN) the composition is skewed to polar residues. The Mg(2+) site is built by Asp240 and Asp242. The PAP-associated domain occupies 409-462 (LGDLLLGFLKYFAVEFDWSKDIISLREAKALPRTDDYEWRNKYICVEEPFDGSN).

It belongs to the DNA polymerase type-B-like family. GLD2 subfamily. In terms of assembly, component of a complex at least composed of cpeb1, cpsf1, tent2/gld2, pabpc1/ePAB, parn and sympk. Following oocyte maturation, parn is expelled from the complex. Interacts with rbfox2. Interacts with sympk. It depends on Mg(2+) as a cofactor. The cofactor is Mn(2+).

The protein resides in the cytoplasm. It catalyses the reaction RNA(n) + ATP = RNA(n)-3'-adenine ribonucleotide + diphosphate. Cytoplasmic poly(A) RNA polymerase that adds successive AMP monomers to the 3'-end of specific RNAs, forming a poly(A) tail. In contrast to the canonical nuclear poly(A) RNA polymerase, it only adds poly(A) to selected cytoplasmic mRNAs during oocyte maturation. Plays a central role during oocyte maturation by mediating polyadenylation of dormant mRNAs, which contain 5'AAUAAA-3' sequence in their 3'-UTR. In immature oocytes, polyadenylation of poly(A) tails is counteracted by the ribonuclease parn. During maturation parn is excluded from the ribonucleoprotein complex, allowing poly(A) elongation and activation of mRNAs. May not play a role in replication-dependent histone mRNA degradation. The protein is Poly(A) RNA polymerase GLD2-B of Xenopus laevis (African clawed frog).